Reading from the N-terminus, the 61-residue chain is Large ribosomal subunit protein uL30 (61 aa).

The protein belongs to the universal ribosomal protein uL30 family. In terms of assembly, part of the 50S ribosomal subunit.

This Exiguobacterium sibiricum (strain DSM 17290 / CCUG 55495 / CIP 109462 / JCM 13490 / 255-15) protein is Large ribosomal subunit protein uL30.